The following is a 280-amino-acid chain: Large ribosomal subunit protein uL2 (280 aa).

Disordered stretches follow at residues 27–58 (STPE…GGGH) and 226–280 (MNPV…KHGR). 2 stretches are compositionally biased toward basic residues: residues 37-58 (LHGH…GGGH) and 268-280 (IVRR…KHGR).

It belongs to the universal ribosomal protein uL2 family. In terms of assembly, part of the 50S ribosomal subunit. Forms a bridge to the 30S subunit in the 70S ribosome.

In terms of biological role, one of the primary rRNA binding proteins. Required for association of the 30S and 50S subunits to form the 70S ribosome, for tRNA binding and peptide bond formation. It has been suggested to have peptidyltransferase activity; this is somewhat controversial. Makes several contacts with the 16S rRNA in the 70S ribosome. This Mycobacterium ulcerans (strain Agy99) protein is Large ribosomal subunit protein uL2.